Reading from the N-terminus, the 197-residue chain is uncharacterized protein (197 aa).

2 disordered regions span residues Met1 to Val30 and Pro115 to Leu174. Residues Lys21–Val30 show a composition bias toward low complexity. A compositionally biased stretch (acidic residues) spans Lys123–Glu137. Residues Lys157–Ser170 are compositionally biased toward basic residues.

This is an uncharacterized protein from Dictyostelium discoideum (Social amoeba).